The sequence spans 182 residues: MEKLRESLHEAPIIDKDGYSYLVHPLSNGVPMLEPELLREVVVGVTRAADLDVDKIVAPEAMGIHIATALSLQTDIPLVVIRKRSYGLDDEVPLHKTTGYSESEMFINDIEAGDDLLIVDDLLSTGGTMAAICEALDDIGADISDIVVVFRKQGESALDDTDYDVTSLLDISVDQDGVTIHD.

Belongs to the purine/pyrimidine phosphoribosyltransferase family. Archaeal HPRT subfamily.

Functionally, may catalyze a purine salvage reaction, the substrate is unknown. The polypeptide is HGPRTase-like protein 1 (Haloarcula marismortui (strain ATCC 43049 / DSM 3752 / JCM 8966 / VKM B-1809) (Halobacterium marismortui)).